The following is a 241-amino-acid chain: tRNA (guanine-N(7)-)-methyltransferase (241 aa).

The S-adenosyl-L-methionine site is built by glutamate 76, glutamate 101, aspartate 128, and aspartate 150. Aspartate 150 is a catalytic residue. Substrate contacts are provided by residues lysine 154, aspartate 186, and threonine 219 to glutamate 222.

It belongs to the class I-like SAM-binding methyltransferase superfamily. TrmB family.

The catalysed reaction is guanosine(46) in tRNA + S-adenosyl-L-methionine = N(7)-methylguanosine(46) in tRNA + S-adenosyl-L-homocysteine. The protein operates within tRNA modification; N(7)-methylguanine-tRNA biosynthesis. Catalyzes the formation of N(7)-methylguanine at position 46 (m7G46) in tRNA. The protein is tRNA (guanine-N(7)-)-methyltransferase of Cereibacter sphaeroides (strain ATCC 17023 / DSM 158 / JCM 6121 / CCUG 31486 / LMG 2827 / NBRC 12203 / NCIMB 8253 / ATH 2.4.1.) (Rhodobacter sphaeroides).